The sequence spans 260 residues: Putative imidazole glycerol phosphate synthase subunit hisF3 (260 aa).

Residue D135 is part of the active site.

The protein belongs to the HisA/HisF family. In terms of assembly, heterodimer of HisH and HisF.

The protein resides in the cytoplasm. It carries out the reaction 5-[(5-phospho-1-deoxy-D-ribulos-1-ylimino)methylamino]-1-(5-phospho-beta-D-ribosyl)imidazole-4-carboxamide + L-glutamine = D-erythro-1-(imidazol-4-yl)glycerol 3-phosphate + 5-amino-1-(5-phospho-beta-D-ribosyl)imidazole-4-carboxamide + L-glutamate + H(+). The protein operates within amino-acid biosynthesis; L-histidine biosynthesis; L-histidine from 5-phospho-alpha-D-ribose 1-diphosphate: step 5/9. In terms of biological role, IGPS catalyzes the conversion of PRFAR and glutamine to IGP, AICAR and glutamate. The HisF subunit catalyzes the cyclization activity that produces IGP and AICAR from PRFAR using the ammonia provided by the HisH subunit. In Vibrio vulnificus (strain YJ016), this protein is Putative imidazole glycerol phosphate synthase subunit hisF3 (hisF3).